We begin with the raw amino-acid sequence, 350 residues long: Dihydroorotate dehydrogenase (quinone) (350 aa).

Residues 61 to 65 and Thr85 each bind FMN; that span reads AGLDK. Lys65 is a substrate binding site. Position 110-114 (110-114) interacts with substrate; sequence NRMGF. The FMN site is built by Asn139 and Asn172. Asn172 lines the substrate pocket. Ser175 (nucleophile) is an active-site residue. Asn177 contributes to the substrate binding site. Lys217 and Thr245 together coordinate FMN. 246-247 is a binding site for substrate; that stretch reads NT. FMN is bound by residues Gly268, Gly297, and 318 to 319; that span reads YS.

It belongs to the dihydroorotate dehydrogenase family. Type 2 subfamily. As to quaternary structure, monomer. FMN serves as cofactor.

It localises to the cell membrane. The enzyme catalyses (S)-dihydroorotate + a quinone = orotate + a quinol. It functions in the pathway pyrimidine metabolism; UMP biosynthesis via de novo pathway; orotate from (S)-dihydroorotate (quinone route): step 1/1. Functionally, catalyzes the conversion of dihydroorotate to orotate with quinone as electron acceptor. The protein is Dihydroorotate dehydrogenase (quinone) of Flavobacterium lutescens.